Consider the following 496-residue polypeptide: Maintenance of mitochondrial morphology protein 1 (496 aa).

Residues 1–22 (MSSQLNDPTPIPAQSSLSFTQG) lie on the Lumenal side of the membrane. A helical transmembrane segment spans residues 23–43 (FLLGQLSVVLLIAAFIKFFIF). At 44–496 (GEAPPPPSRG…SLPGGGVTTT (453 aa)) the chain is on the cytoplasmic side. 4 disordered regions span residues 50–96 (PSRG…VPSS), 276–331 (PLDT…KSNV), 395–433 (GRTGVRTGDDSETGSNAPRSSTAADASGPAHHEDSSREP), and 449–496 (DLAS…VTTT). A compositionally biased stretch (basic residues) spans 54–64 (LSHRSATHRRS). A compositionally biased stretch (polar residues) spans 65-74 (NSIYSSTQHD). Residues 75–84 (GNTRTLREKP) show a composition bias toward basic and acidic residues. Positions 85–96 (SNSNVLRPVPSS) are enriched in polar residues. An SMP-LTD domain is found at 131-388 (QPESLDWFNV…EPRVQVVGLP (258 aa)). The span at 276 to 287 (PLDTPSHSPSPP) shows a compositional bias: pro residues. Residues 407–418 (TGSNAPRSSTAA) show a composition bias toward polar residues. Basic and acidic residues-rich tracts occupy residues 424–433 (AHHEDSSREP) and 462–474 (GDLRSRSMTREES).

Belongs to the MMM1 family. As to quaternary structure, homodimer. Component of the ER-mitochondria encounter structure (ERMES) or MDM complex, composed of mmm1, mdm10, mdm12 and mdm34. A mmm1 homodimer associates with one molecule of mdm12 on each side in a pairwise head-to-tail manner, and the SMP-LTD domains of mmm1 and mdm12 generate a continuous hydrophobic tunnel for phospholipid trafficking.

Its subcellular location is the endoplasmic reticulum membrane. Its function is as follows. Component of the ERMES/MDM complex, which serves as a molecular tether to connect the endoplasmic reticulum (ER) and mitochondria. Components of this complex are involved in the control of mitochondrial shape and protein biogenesis, and function in nonvesicular lipid trafficking between the ER and mitochondria. The mdm12-mmm1 subcomplex functions in the major beta-barrel assembly pathway that is responsible for biogenesis of all outer membrane beta-barrel proteins, and acts in a late step after the SAM complex. The mdm10-mdm12-mmm1 subcomplex further acts in the TOM40-specific pathway after the action of the mdm12-mmm1 complex. Essential for establishing and maintaining the structure of mitochondria and maintenance of mtDNA nucleoids. This Neosartorya fischeri (strain ATCC 1020 / DSM 3700 / CBS 544.65 / FGSC A1164 / JCM 1740 / NRRL 181 / WB 181) (Aspergillus fischerianus) protein is Maintenance of mitochondrial morphology protein 1.